The primary structure comprises 905 residues: Protein translocase subunit SecA (905 aa).

ATP is bound by residues Q87, 105–109 (GEGKT), and D512. Positions 840 to 905 (AQRQQEAMAQ…HCHGSKARYA (66 aa)) are disordered. A compositionally biased stretch (low complexity) spans 843 to 852 (QQEAMAQAES). Over residues 853-862 (ENYRTADHQA) the composition is skewed to basic and acidic residues. Residues 863–874 (EAQQSESLTEEQ) show a composition bias toward polar residues. 4 residues coordinate Zn(2+): C886, C888, C897, and H898. Positions 892–905 (KKYKHCHGSKARYA) are enriched in basic residues.

It belongs to the SecA family. Monomer and homodimer. Part of the essential Sec protein translocation apparatus which comprises SecA, SecYEG and auxiliary proteins SecDF-YajC and YidC. Zn(2+) is required as a cofactor.

The protein resides in the cell inner membrane. Its subcellular location is the cytoplasm. It carries out the reaction ATP + H2O + cellular proteinSide 1 = ADP + phosphate + cellular proteinSide 2.. In terms of biological role, part of the Sec protein translocase complex. Interacts with the SecYEG preprotein conducting channel. Has a central role in coupling the hydrolysis of ATP to the transfer of proteins into and across the cell membrane, serving both as a receptor for the preprotein-SecB complex and as an ATP-driven molecular motor driving the stepwise translocation of polypeptide chains across the membrane. The protein is Protein translocase subunit SecA of Actinobacillus pleuropneumoniae serotype 3 (strain JL03).